Here is a 151-residue protein sequence, read N- to C-terminus: uncharacterized protein (151 aa).

This is an uncharacterized protein from Escherichia coli.